Here is a 747-residue protein sequence, read N- to C-terminus: Protein PHTF2 (747 aa).

The PHTF domain maps to 6 to 153 (TDAIVWYQKK…VHCQIVSTRT (148 aa)). 2 helical membrane passes run 98 to 118 (VIFSWLLVLYLLQVAAIVLFC) and 126 to 146 (IPLTEVIGPIWLMLLLGTVHC). Disordered regions lie at residues 170-192 (KAAHLEVHREGDGSSTTDNTQEG) and 268-365 (EDAA…SETE). The span at 172-181 (AHLEVHREGD) shows a compositional bias: basic and acidic residues. Residues 182-192 (GSSTTDNTQEG) are compositionally biased toward polar residues. An N-linked (GlcNAc...) asparagine glycan is attached at asparagine 291. The span at 321 to 331 (RNRKPHHYKKH) shows a compositional bias: basic residues. A compositionally biased stretch (low complexity) spans 340–352 (SGTSCSSRCSSSR). Basic and acidic residues predominate over residues 353-362 (QDSESTRPES). Transmembrane regions (helical) follow at residues 459–479 (IGYQVFGNAISLILGLTPFVF), 515–535 (VLISFVVRVSLVWIFFFLLCV), 596–616 (VIVSSAFLLTISVVFICCAQL), and 630–650 (WELVIWCISLTLFLLRFVTLG). N-linked (GlcNAc...) asparagine glycans are attached at residues asparagine 659 and asparagine 718. The chain crosses the membrane as a helical span at residues 722-742 (VVILSAVSGVISDLLGFNLKL).

It is found in the membrane. The protein is Protein PHTF2 (Phtf2) of Mus musculus (Mouse).